The sequence spans 395 residues: THP3 homolog C2A9.11c (395 aa).

The segment at 91–127 (LLSEEDEVDKKEKRRRRFENGSRSQNNAKSEELKVNP) is disordered. Positions 218 to 384 (DVGEYNQCQT…STDRFEKCMK (167 aa)) constitute a PCI domain.

This sequence belongs to the THP3 family.

It localises to the cytoplasm. The protein localises to the nucleus. Functionally, required for transcription elongation. May also be involved in pre-mRNA splicing. The sequence is that of THP3 homolog C2A9.11c from Schizosaccharomyces pombe (strain 972 / ATCC 24843) (Fission yeast).